Reading from the N-terminus, the 555-residue chain is Natural resistance-associated macrophage protein 1 (555 aa).

Topologically, residues 1-63 are cytoplasmic; it reads MSGSGPAMAS…STPGFSFRKL (63 aa). Residues 64–81 traverse the membrane as a helical segment; that stretch reads WAFTGPGFLMSIAYLDPG. At 82–90 the chain is on the extracellular side; that stretch reads NVESDLQCG. A helical membrane pass occupies residues 91–110; that stretch reads AVAGFKLLWVLLWATVLGLL. Over 111–147 the chain is Cytoplasmic; the sequence is CQRLAIRLGVVTGKDLAEICYLYYPRVPRVLLWLMME. A helical transmembrane segment spans residues 148-168; the sequence is IAIIGSDMQEVIGTAIAFSLL. At 169–172 the chain is on the extracellular side; that stretch reads SAGR. Residues 173–192 traverse the membrane as a helical segment; sequence IPLWGGVLITITDTLFFLFL. The Cytoplasmic portion of the chain corresponds to 193–201; that stretch reads DKYGLRKLE. The helical transmembrane segment at 202–222 threads the bilayer; the sequence is AFFGFLITIMALTFGYEYVMV. At 223 to 245 the chain is on the extracellular side; that stretch reads RPAQTEVLKGIFLPYCPGCGREE. Residues 246–264 traverse the membrane as a helical segment; that stretch reads LLQAVGIVGAIIMPHNIFL. Topologically, residues 265-292 are cytoplasmic; sequence HSSLVKTRAIDRSKKEEVKEANMYFLTE. Residues 293-312 traverse the membrane as a helical segment; sequence SCLALFVSFLINLFVMAVFG. Over 313–354 the chain is Extracellular; that stretch reads EAFYHQRNEDVHNKCVNSSVSRYASIFPINNETVSVDIYQGG. 2 N-linked (GlcNAc...) asparagine glycosylation sites follow: Asn-329 and Asn-343. Residues 355 to 374 form a helical membrane-spanning segment; it reads VILGCYFGAAALYIWAVGIL. Over 375–405 the chain is Cytoplasmic; the sequence is AAGQSSTMTGTYAGQFVMEGFLQLRWSRFTR. The helical transmembrane segment at 406–423 threads the bilayer; the sequence is VLFTRSLAILPTLFVAAF. Topologically, residues 424-434 are extracellular; the sequence is RDVSQLTGMND. A helical membrane pass occupies residues 435 to 455; it reads LLNVLQSILLPFAVLPVLTFT. Topologically, residues 456–471 are cytoplasmic; it reads SLRPLMHDFANGLLGQ. Residues 472–493 traverse the membrane as a helical segment; it reads VLMSLITGLVCAINVYFVVDFL. Over 494 to 501 the chain is Extracellular; sequence PTLRGLGY. Residues 502–521 traverse the membrane as a helical segment; sequence LIPLGLLLVAYVAFVTYLLW. The Cytoplasmic portion of the chain corresponds to 522–555; that stretch reads TCSIAHGARFLARGRYNRFSFDVTADVPGLAGPH.

Belongs to the NRAMP family. In terms of tissue distribution, macrophages; spleen and thymus and at lower level in liver and lung.

The protein resides in the late endosome membrane. It localises to the lysosome membrane. The enzyme catalyses Zn(2+)(in) + H(+)(out) = Zn(2+)(out) + H(+)(in). It carries out the reaction Fe(2+)(in) + H(+)(out) = Fe(2+)(out) + H(+)(in). The catalysed reaction is Mn(2+)(in) + H(+)(out) = Mn(2+)(out) + H(+)(in). Functionally, macrophage-specific antiporter that fluxes metal ions in either direction against a proton gradient. Localized to late endosomal lysosomal membranes, delivers bivalent cations from the cytosol into these acidic compartments where they may directly affect antimicrobial activity. Involved in iron metabolism and host natural resistance to infection with intracellular parasites. Pathogen resistance involves sequestration of Fe(2+) and Mn(2+), cofactors of both prokaryotic and eukaryotic catalases and superoxide dismutases, not only to protect the macrophage against its own generation of reactive oxygen species, but to deny the cations to the pathogen for synthesis of its protective enzymes. The protein is Natural resistance-associated macrophage protein 1 (SLC11A1) of Gallus gallus (Chicken).